Here is a 317-residue protein sequence, read N- to C-terminus: MAASSGSPQLATEDHLRKGEAVSGLHAVVAGSVSGLVARSVTAPMDTVKIRRQLQLASEHKYHGILHTFRTVAREEGVRALWKGNVPASAMYVLYGSLQFGTYAWLNTAAASAGLPPQAHSLAVGALAGLVSSLLTYPLDLLRTRLVANRSAHFFSLRRQARVIWDTEGPAGFFRGGAWAIAATTLTTGLIFGIYETCTIAADTYGLPWLAAAASPTAGLVSKAAVFPLDTVRRRLQIVDAKHIPFFTRDPGAYSALRGTRFLGLAVHMVRAEGIASLYKGLTMALCKSTPTTVITLWVYQRCLRLLEPTRAPQLPA.

Helical transmembrane passes span 21–41 (AVSG…ARSV), 86–106 (VPAS…YAWL), 122–142 (LAVG…LDLL), 176–196 (GGAW…GIYE), 207–227 (LPWL…AAVF), and 281–300 (GLTM…LWVY). 3 Solcar repeats span residues 22–109 (VSGL…LNTA), 116–201 (PPQA…CTIA), and 206–306 (GLPW…CLRL).

This sequence belongs to the mitochondrial carrier (TC 2.A.29) family.

The protein resides in the mitochondrion inner membrane. Functionally, mitochondrial transporter that mediates uptake of thiamine pyrophosphate (ThPP) into mitochondria. This is Mitochondrial thiamine pyrophosphate carrier 1 (TPC1) from Eremothecium gossypii (strain ATCC 10895 / CBS 109.51 / FGSC 9923 / NRRL Y-1056) (Yeast).